We begin with the raw amino-acid sequence, 194 residues long: CASP-like protein 1D1 (194 aa).

Residues 1 to 16 (MGSDETKSTLDTERST) are compositionally biased toward basic and acidic residues. Residues 1 to 23 (MGSDETKSTLDTERSTVPRTGTT) are disordered. At 1–31 (MGSDETKSTLDTERSTVPRTGTTTKSCSITQ) the chain is on the cytoplasmic side. A helical membrane pass occupies residues 32–52 (VVLRFVLFAATLTSIVVMVTS). The Extracellular segment spans residues 53 to 77 (KQTKNIFIPGTPIRIPAAKFTNSPA). Residues 78–98 (LIYFVVALSVACFYSIVSTFV) traverse the membrane as a helical segment. Residues 99–109 (TVSAFKKHSCS) are Cytoplasmic-facing. Residues 110-130 (AILLLNLAIMDAVMVGIVASA) form a helical membrane-spanning segment. Over 131-163 (TGAGGGVAYLGLKGNKEVRWGKICNIYDKFCRH) the chain is Extracellular. Residues 164–184 (VGGAIAVSLFASVILLLLSII) form a helical membrane-spanning segment. The Cytoplasmic segment spans residues 185-194 (SVLSLYKKIR).

It belongs to the Casparian strip membrane proteins (CASP) family. Homodimer and heterodimers.

It is found in the cell membrane. This Arabidopsis lyrata subsp. lyrata (Lyre-leaved rock-cress) protein is CASP-like protein 1D1.